The primary structure comprises 463 residues: ATP-dependent protease ATPase subunit HslU (463 aa).

ATP is bound by residues Ile19, 61-66, Asp277, Glu341, and Arg413; that span reads GVGKTE.

It belongs to the ClpX chaperone family. HslU subfamily. In terms of assembly, a double ring-shaped homohexamer of HslV is capped on each side by a ring-shaped HslU homohexamer. The assembly of the HslU/HslV complex is dependent on binding of ATP.

It is found in the cytoplasm. Its function is as follows. ATPase subunit of a proteasome-like degradation complex; this subunit has chaperone activity. The binding of ATP and its subsequent hydrolysis by HslU are essential for unfolding of protein substrates subsequently hydrolyzed by HslV. HslU recognizes the N-terminal part of its protein substrates and unfolds these before they are guided to HslV for hydrolysis. The sequence is that of ATP-dependent protease ATPase subunit HslU from Bacillus cereus (strain B4264).